We begin with the raw amino-acid sequence, 79 residues long: Cell division protein ZapB (79 aa).

Positions 4 to 78 form a coiled coil; sequence EVFEKLEAKV…LRALLGKMEE (75 aa).

The protein belongs to the ZapB family. In terms of assembly, homodimer. The ends of the coiled-coil dimer bind to each other, forming polymers. Interacts with FtsZ.

The protein localises to the cytoplasm. Non-essential, abundant cell division factor that is required for proper Z-ring formation. It is recruited early to the divisome by direct interaction with FtsZ, stimulating Z-ring assembly and thereby promoting cell division earlier in the cell cycle. Its recruitment to the Z-ring requires functional FtsA or ZipA. The sequence is that of Cell division protein ZapB from Pectobacterium carotovorum subsp. carotovorum (strain PC1).